The chain runs to 240 residues: Insulin-like growth factor-binding protein 6 (240 aa).

A signal peptide spans 1–27; sequence MTPHRLLPPLLLLLALLLAASPGGALA. The 80-residue stretch at 28 to 107 folds into the IGFBP N-terminal domain; sequence RCPGCGQGVQ…LLGRGRCLPA (80 aa). Intrachain disulfides connect C29–C32, C40–C44, C57–C63, C71–C84, and C78–C104. Residues 109–160 are disordered; sequence APAVAEENPKESKPQAGTARPQDVNRRDQQRNPGTSTTPSQPNSAGVQDTEM. A glycan (O-linked (HexNAc...) threonine) is linked at T126. Over residues 139–155 the composition is skewed to polar residues; the sequence is RNPGTSTTPSQPNSAGV. A glycan (O-linked (HexNAc...) serine) is linked at S144. O-linked (HexNAc...) threonine glycans are attached at residues T145 and T146. S152 carries O-linked (HexNAc...) serine glycosylation. The region spanning 160–234 is the Thyroglobulin type-1 domain; that stretch reads MGPCRRHLDS…SPDGNGSSSC (75 aa). Cystine bridges form between C163/C190, C201/C212, and C214/C234. The tract at residues 217 to 240 is disordered; that stretch reads RMGKSLPGSPDGNGSSSCPTGSSG. A compositionally biased stretch (polar residues) spans 228-240; it reads GNGSSSCPTGSSG.

In terms of assembly, interacts (via C-terminal domain) with PHB2. Post-translationally, O-linked glycans consist of hexose (probably Gal), N-acetylhexosamine (probably GalNAc) and sialic acid residues. O-glycosylated with core 1 or possibly core 8 glycans. O-glycosylated on one site only in the region AA 143-168 in cerebrospinal fluid.

The protein localises to the secreted. In terms of biological role, IGF-binding proteins prolong the half-life of the IGFs and have been shown to either inhibit or stimulate the growth promoting effects of the IGFs on cell culture. They alter the interaction of IGFs with their cell surface receptors. Activates the MAPK signaling pathway and induces cell migration. The sequence is that of Insulin-like growth factor-binding protein 6 from Homo sapiens (Human).